The sequence spans 318 residues: Porphobilinogen deaminase (318 aa).

An S-(dipyrrolylmethanemethyl)cysteine modification is found at Cys241.

It belongs to the HMBS family. As to quaternary structure, monomer. Dipyrromethane is required as a cofactor.

The catalysed reaction is 4 porphobilinogen + H2O = hydroxymethylbilane + 4 NH4(+). The protein operates within porphyrin-containing compound metabolism; protoporphyrin-IX biosynthesis; coproporphyrinogen-III from 5-aminolevulinate: step 2/4. Functionally, tetrapolymerization of the monopyrrole PBG into the hydroxymethylbilane pre-uroporphyrinogen in several discrete steps. This Geobacter sp. (strain M21) protein is Porphobilinogen deaminase.